The chain runs to 728 residues: Polyphosphate kinase (728 aa).

Asn-57 serves as a coordination point for ATP. Arg-408 and Arg-438 together coordinate Mg(2+). His-468 (phosphohistidine intermediate) is an active-site residue. ATP contacts are provided by Tyr-501, Arg-597, and His-625. Residues 694 to 728 are disordered; that stretch reads VQRRPASPEQSQSSQAIFTAQAIAETTEDPELRSV. The span at 695 to 709 shows a compositional bias: low complexity; the sequence is QRRPASPEQSQSSQA.

This sequence belongs to the polyphosphate kinase 1 (PPK1) family. The cofactor is Mg(2+). In terms of processing, an intermediate of this reaction is the autophosphorylated ppk in which a phosphate is covalently linked to a histidine residue through a N-P bond.

It carries out the reaction [phosphate](n) + ATP = [phosphate](n+1) + ADP. In terms of biological role, catalyzes the reversible transfer of the terminal phosphate of ATP to form a long-chain polyphosphate (polyP). This Synechocystis sp. (strain ATCC 27184 / PCC 6803 / Kazusa) protein is Polyphosphate kinase.